The following is a 301-amino-acid chain: 2-oxo-3-(phosphooxy)propyl 3-oxoalkanoate synthase (301 aa).

The protein belongs to the AfsA family.

It carries out the reaction a medium-chain 3-oxoacyl-[ACP] + dihydroxyacetone phosphate = a (4-alkanoyl-5-oxo-2,5-dihydrofuran-3-yl)methyl phosphate + holo-[ACP] + H2O. Involved in the biosynthesis of A factor (2-isocapryloyl-3R-hydroxymethyl-gamma-butyrolactone), a gamma-butyrolactone autoregulator that triggers secondary metabolism and morphogenesis in Streptomyces. Catalyzes beta-ketoacyl transfer from 8-methyl-3-oxononanoyl-acyl carrier protein (ACP) to the hydroxyl group of dihydroxyacetone phosphate (DHAP), thus producing an 8-methyl-3-oxononanoyl-DHAP ester. The sequence is that of 2-oxo-3-(phosphooxy)propyl 3-oxoalkanoate synthase from Streptomyces griseus.